The following is a 256-amino-acid chain: uncharacterized protein (256 aa).

Residue 9–33 (VTGGGQGIGAAIAQLFAENGMKVVI) participates in NADP(+) binding. Ser140 serves as a coordination point for substrate. The Proton acceptor role is filled by Tyr153.

This sequence belongs to the short-chain dehydrogenases/reductases (SDR) family.

This is an uncharacterized protein from Thermotoga maritima (strain ATCC 43589 / DSM 3109 / JCM 10099 / NBRC 100826 / MSB8).